The sequence spans 208 residues: Protein-L-isoaspartate O-methyltransferase (208 aa).

Residue serine 59 is part of the active site.

It belongs to the methyltransferase superfamily. L-isoaspartyl/D-aspartyl protein methyltransferase family.

It localises to the cytoplasm. The enzyme catalyses [protein]-L-isoaspartate + S-adenosyl-L-methionine = [protein]-L-isoaspartate alpha-methyl ester + S-adenosyl-L-homocysteine. Functionally, catalyzes the methyl esterification of L-isoaspartyl residues in peptides and proteins that result from spontaneous decomposition of normal L-aspartyl and L-asparaginyl residues. It plays a role in the repair and/or degradation of damaged proteins. The protein is Protein-L-isoaspartate O-methyltransferase of Escherichia coli O1:K1 / APEC.